A 254-amino-acid polypeptide reads, in one-letter code: Ribonuclease PH (254 aa).

Residues R90 and 128-130 (GTR) each bind phosphate.

This sequence belongs to the RNase PH family. In terms of assembly, homohexameric ring arranged as a trimer of dimers.

The catalysed reaction is tRNA(n+1) + phosphate = tRNA(n) + a ribonucleoside 5'-diphosphate. Phosphorolytic 3'-5' exoribonuclease that plays an important role in tRNA 3'-end maturation. Removes nucleotide residues following the 3'-CCA terminus of tRNAs; can also add nucleotides to the ends of RNA molecules by using nucleoside diphosphates as substrates, but this may not be physiologically important. Probably plays a role in initiation of 16S rRNA degradation (leading to ribosome degradation) during starvation. In Corynebacterium kroppenstedtii (strain DSM 44385 / JCM 11950 / CIP 105744 / CCUG 35717), this protein is Ribonuclease PH.